A 306-amino-acid chain; its full sequence is Porphobilinogen deaminase (306 aa).

Cysteine 241 is modified (S-(dipyrrolylmethanemethyl)cysteine).

The protein belongs to the HMBS family. Monomer. It depends on dipyrromethane as a cofactor.

The catalysed reaction is 4 porphobilinogen + H2O = hydroxymethylbilane + 4 NH4(+). Its pathway is porphyrin-containing compound metabolism; protoporphyrin-IX biosynthesis; coproporphyrinogen-III from 5-aminolevulinate: step 2/4. Its function is as follows. Tetrapolymerization of the monopyrrole PBG into the hydroxymethylbilane pre-uroporphyrinogen in several discrete steps. This Acidithiobacillus ferrooxidans (strain ATCC 23270 / DSM 14882 / CIP 104768 / NCIMB 8455) (Ferrobacillus ferrooxidans (strain ATCC 23270)) protein is Porphobilinogen deaminase.